The following is a 535-amino-acid chain: Estrogen receptor (535 aa).

Positions 1 to 21 (SRMLTDPPRIGSMQSLGSSPT) are disordered. The segment at 1–104 (SRMLTDPPRI…VFEMANETRY (104 aa)) is modulating. The span at 12 to 21 (SMQSLGSSPT) shows a compositional bias: polar residues. 2 consecutive NR C4-type zinc fingers follow at residues 105–125 (CAVC…CEGC) and 141–165 (CPAT…LRKC). A DNA-binding region (nuclear receptor) is located at residues 105 to 170 (CAVCSDFASG…RLRKCYEVGM (66 aa)). Positions 171–236 (VKGGLRKDRG…GGWCGPRITM (66 aa)) are hinge. Residues 187–229 (DKRYCGPAGDREKPYGDLEHRTAPPQDGGRNSSSSSLSGGGGW) form a disordered region. Positions 195 to 208 (GDREKPYGDLEHRT) are enriched in basic and acidic residues. Residues 214–223 (GGRNSSSSSL) show a composition bias toward low complexity. The NR LBD domain occupies 237–473 (PPEQVLFLLQ…DLLLEMLDGH (237 aa)). The disordered stretch occupies residues 478 to 535 (PGKVAQAGEQTEGPSTTTTTSTGSSIGPMRGSQDTHIRSPGSGVLQYGSPSSDQMPIP). Low complexity predominate over residues 492 to 502 (STTTTTSTGSS). Polar residues predominate over residues 525–535 (GSPSSDQMPIP).

Belongs to the nuclear hormone receptor family. NR3 subfamily. As to quaternary structure, binds DNA as a homodimer. Can form a heterodimer with ER-beta. In terms of tissue distribution, highest expression in brain and liver.

Its subcellular location is the nucleus. The steroid hormones and their receptors are involved in the regulation of eukaryotic gene expression and affect cellular proliferation and differentiation in target tissues. The protein is Estrogen receptor (esr1) of Salmo salar (Atlantic salmon).